The primary structure comprises 609 residues: QWRF motif-containing protein 4 (609 aa).

Disordered stretches follow at residues 1–227 (MQVG…IRGN) and 271–369 (EVSS…TAQS). Polar residues-rich tracts occupy residues 11-21 (GKQQQSVSDAT) and 46-57 (EVSSRYRSPTPT). 2 stretches are compositionally biased toward low complexity: residues 98–110 (PVSD…PVSS) and 129–143 (SLSV…SVPV). Residues 151 to 180 (VTSSTDRTLRPSSSNIAHKQQSETTSVTRK) show a composition bias toward polar residues. Low complexity-rich tracts occupy residues 271–285 (EVSS…SSTE) and 302–332 (SAPG…PSRG). Positions 407-410 (QWRF) match the QWRF motif motif. Residues 588 to 609 (EEEVRDDAESSPLLPLSKFQWP) are disordered.

It belongs to the QWRF family.

This is QWRF motif-containing protein 4 (QWRF4) from Arabidopsis thaliana (Mouse-ear cress).